Reading from the N-terminus, the 143-residue chain is MAIERTFSIIKPDAVAKNHIGAIYNRFETAGLKIIASKMLHLSKEQAEGFYAEHSERPFFGALVEFMTSGPICVQVLEGENAVLANREIMGATNPAEAARGTIRSDFADSIDENAVHGSDAVASAEREIAYFFSTEELCPRTR.

ATP-binding residues include Lys11, Phe59, Arg87, Thr93, Arg104, and Asn114. His117 functions as the Pros-phosphohistidine intermediate in the catalytic mechanism.

Belongs to the NDK family. Homotetramer. The cofactor is Mg(2+).

It localises to the cytoplasm. The enzyme catalyses a 2'-deoxyribonucleoside 5'-diphosphate + ATP = a 2'-deoxyribonucleoside 5'-triphosphate + ADP. It carries out the reaction a ribonucleoside 5'-diphosphate + ATP = a ribonucleoside 5'-triphosphate + ADP. Functionally, major role in the synthesis of nucleoside triphosphates other than ATP. The ATP gamma phosphate is transferred to the NDP beta phosphate via a ping-pong mechanism, using a phosphorylated active-site intermediate. The chain is Nucleoside diphosphate kinase from Shewanella sediminis (strain HAW-EB3).